The sequence spans 408 residues: Putative transporter AmpG 2 (408 aa).

Transmembrane regions (helical) follow at residues 11–31, 49–69, 84–104, 110–130, 154–174, 177–197, 224–244, 261–281, 294–311, 315–337, 353–373, and 382–402; these read IFNILFILIISFPGGLIYLLT, IGLFGLVNFIYILKFLWGPLL, YCLVITLINCIVCVYVLTSFN, TPFVLCLIVLAFFSSIYDMLI, FRIGILISGSGALYLSTIISW, VYRTMAILCIPSLLLIIFYPL, WIVIISFMLLYRLQDSFLSIM, IGYKAFGMCAAIFGGVIGGFL, VLIYHALSSLSFIYLYFL, IISLYIAVFCQEFTKGLTMSPFF, IALITSITNVGTILIGSISGY, and YFFIVAGLCFIPAYILILYLP.

It belongs to the major facilitator superfamily.

Its subcellular location is the cell inner membrane. The chain is Putative transporter AmpG 2 (ampG2) from Rickettsia typhi (strain ATCC VR-144 / Wilmington).